Consider the following 204-residue polypeptide: Acyl-homoserine-lactone synthase (204 aa).

Belongs to the autoinducer synthase family.

It catalyses the reaction a fatty acyl-[ACP] + S-adenosyl-L-methionine = an N-acyl-L-homoserine lactone + S-methyl-5'-thioadenosine + holo-[ACP] + H(+). Its function is as follows. Required for the synthesis of acyl-HSL autoinducers that bind to SolR. This chain is Acyl-homoserine-lactone synthase (solI), found in Ralstonia solanacearum (Pseudomonas solanacearum).